The following is a 341-amino-acid chain: Ferrochelatase (341 aa).

2 residues coordinate Fe cation: H189 and E293.

The protein belongs to the ferrochelatase family.

It localises to the cytoplasm. The enzyme catalyses heme b + 2 H(+) = protoporphyrin IX + Fe(2+). It participates in porphyrin-containing compound metabolism; protoheme biosynthesis; protoheme from protoporphyrin-IX: step 1/1. Catalyzes the ferrous insertion into protoporphyrin IX. In Pseudomonas fluorescens (strain SBW25), this protein is Ferrochelatase.